The following is a 717-amino-acid chain: Inhibitor of nuclear factor kappa-B kinase subunit epsilon (717 aa).

The Protein kinase domain occupies 9–315 (WHTDDLLGQG…LQRTVIHVFS (307 aa)). Residue 15 to 23 (LGQGATASV) coordinates ATP. K30 is covalently cross-linked (Glycyl lysine isopeptide (Lys-Gly) (interchain with G-Cter in ubiquitin)). K38 provides a ligand contact to ATP. D135 (proton acceptor) is an active-site residue. S172 carries the post-translational modification Phosphoserine; by autocatalysis and IKKB. Residue K231 forms a Glycyl lysine isopeptide (Lys-Gly) (interchain with G-Cter in SUMO1) linkage. An interaction with DDX3X region spans residues 385 to 650 (SSDTPKGLAF…AQESLNKIFD (266 aa)). Residue K403 forms a Glycyl lysine isopeptide (Lys-Gly) (interchain with G-Cter in ubiquitin) linkage. The segment at 452 to 473 (LQDTCQQTLEVTRTALLYLSSS) is leucine-zipper. A Phosphothreonine modification is found at T503. S665 is modified (phosphoserine).

Belongs to the protein kinase superfamily. Ser/Thr protein kinase family. I-kappa-B kinase subfamily. In terms of assembly, homodimer. Interacts with MAVS/IPS1. Interacts (via protein kinase domain) with TTLL12 (via N-terminus); the interaction prevents MAVS binding to IKBKE. Interacts with the adapter proteins AZI2/NAP1, TANK and TBKBP1/SINTBAD. Interacts with SIKE1. Interacts with TICAM1/TRIF, IRF3 and RIGI; interactions are disrupted by the interaction between IKBKE and SIKE1. Interacts with TOPORS; induced by DNA damage. Interacts with CYLD, IKBKB, IKBKG and MYD88. Interacts with IFIH1. Interacts with DDX3X; the interaction may be induced upon virus infection. Interacts with TRIM6 (via SPRY box). Interacts with unanchored K48-linked polyubiquitin chains; this leads to IKBKE activation. Interacts with TBK1. Interacts with FKBP5. In terms of processing, sumoylation by TOPORS upon DNA damage is required for protection of cells against DNA damage-induced cell death. Desumoylated by SENP1. Autophosphorylated and phosphorylated by IKBKB/IKKB. Phosphorylation at Ser-172 is enhanced by the interaction with DDX3X. Phosphorylated at Thr-503 upon IFN activation. Post-translationally, 'Lys-63'-linked polyubiquitinated at Lys-30 and Lys-403 by TRAF2:BIRC2 and TRAF2:BIRC3 complexes. Ubiquitination is induced by LPS, TNFA and interleukin-1 and required for full kinase activity and KF-kappa-B pathway activation. In terms of tissue distribution, expressed in bone marrow-derived macrophages and at low levels in liver and white adipose tissue (at protein level). Detected in muscle and lung.

The protein localises to the cytoplasm. The protein resides in the nucleus. It is found in the PML body. The enzyme catalyses L-seryl-[I-kappa-B protein] + ATP = O-phospho-L-seryl-[I-kappa-B protein] + ADP + H(+). With respect to regulation, kinase activity is inhibited competitively by amlexanox. Serine/threonine kinase that plays an essential role in regulating inflammatory responses to viral infection, through the activation of the type I IFN, NF-kappa-B and STAT signaling. Also involved in TNFA and inflammatory cytokines, like Interleukin-1, signaling. Following activation of viral RNA sensors, such as RIG-I-like receptors, associates with DDX3X and phosphorylates interferon regulatory factors (IRFs), IRF3 and IRF7, as well as DDX3X. This activity allows subsequent homodimerization and nuclear translocation of the IRF3 leading to transcriptional activation of pro-inflammatory and antiviral genes including IFNB. In order to establish such an antiviral state, IKBKE forms several different complexes whose composition depends on the type of cell and cellular stimuli. Thus, several scaffolding molecules including IPS1/MAVS, TANK, AZI2/NAP1 or TBKBP1/SINTBAD can be recruited to the IKBKE-containing-complexes. Activated by polyubiquitination in response to TNFA and interleukin-1, regulates the NF-kappa-B signaling pathway through, at least, the phosphorylation of CYLD. Phosphorylates inhibitors of NF-kappa-B thus leading to the dissociation of the inhibitor/NF-kappa-B complex and ultimately the degradation of the inhibitor. In addition, is also required for the induction of a subset of ISGs which displays antiviral activity, may be through the phosphorylation of STAT1 at 'Ser-708'. Phosphorylation of STAT1 at 'Ser-708' also seems to promote the assembly and DNA binding of ISGF3 (STAT1:STAT2:IRF9) complexes compared to GAF (STAT1:STAT1) complexes, in this way regulating the balance between type I and type II IFN responses. Protects cells against DNA damage-induced cell death. Also plays an important role in energy balance regulation by sustaining a state of chronic, low-grade inflammation in obesity, wich leads to a negative impact on insulin sensitivity. Phosphorylates AKT1. This chain is Inhibitor of nuclear factor kappa-B kinase subunit epsilon (Ikbke), found in Mus musculus (Mouse).